Consider the following 145-residue polypeptide: D-aminoacyl-tRNA deacylase (145 aa).

The short motif at 137-138 (GP) is the Gly-cisPro motif, important for rejection of L-amino acids element.

This sequence belongs to the DTD family. In terms of assembly, homodimer.

It is found in the cytoplasm. The enzyme catalyses glycyl-tRNA(Ala) + H2O = tRNA(Ala) + glycine + H(+). It carries out the reaction a D-aminoacyl-tRNA + H2O = a tRNA + a D-alpha-amino acid + H(+). An aminoacyl-tRNA editing enzyme that deacylates mischarged D-aminoacyl-tRNAs. Also deacylates mischarged glycyl-tRNA(Ala), protecting cells against glycine mischarging by AlaRS. Acts via tRNA-based rather than protein-based catalysis; rejects L-amino acids rather than detecting D-amino acids in the active site. By recycling D-aminoacyl-tRNA to D-amino acids and free tRNA molecules, this enzyme counteracts the toxicity associated with the formation of D-aminoacyl-tRNA entities in vivo and helps enforce protein L-homochirality. This is D-aminoacyl-tRNA deacylase from Colwellia psychrerythraea (strain 34H / ATCC BAA-681) (Vibrio psychroerythus).